The primary structure comprises 364 residues: B3 domain-containing protein At5g38490 (364 aa).

The segment at alanine 148–lysine 202 is disordered. Positions phenylalanine 260–glutamate 364 form a DNA-binding region, TF-B3.

It localises to the nucleus. In Arabidopsis thaliana (Mouse-ear cress), this protein is B3 domain-containing protein At5g38490.